Here is a 210-residue protein sequence, read N- to C-terminus: 2-dehydro-3-deoxy-phosphogluconate aldolase (210 aa).

Glutamate 41 functions as the Proton acceptor in the catalytic mechanism. 3 residues coordinate pyruvate: arginine 45, threonine 69, and lysine 129. The active-site Schiff-base intermediate with substrate is the lysine 129.

The protein belongs to the KHG/KDPG aldolase family. In terms of assembly, homotrimer.

It localises to the cytoplasm. The catalysed reaction is 2-dehydro-3-deoxy-6-phospho-D-gluconate = D-glyceraldehyde 3-phosphate + pyruvate. The protein operates within carbohydrate acid metabolism; 2-dehydro-3-deoxy-D-gluconate degradation; D-glyceraldehyde 3-phosphate and pyruvate from 2-dehydro-3-deoxy-D-gluconate: step 2/2. Functionally, catalyzes the reversible, stereospecific retro-aldol cleavage of 2-keto-3-deoxy-6-phosphogluconate (KDPG) to pyruvate and D-glyceraldehyde-3-phosphate. The protein is 2-dehydro-3-deoxy-phosphogluconate aldolase (eda) of Treponema pallidum (strain Nichols).